A 280-amino-acid polypeptide reads, in one-letter code: Diaminopimelate epimerase (280 aa).

2 residues coordinate substrate: Asn-15 and Asn-66. The Proton donor role is filled by Cys-75. Substrate is bound by residues 76 to 77, Asn-163, Asn-196, and 214 to 215; these read GN and ER. Catalysis depends on Cys-223, which acts as the Proton acceptor. 224–225 contacts substrate; that stretch reads GT.

This sequence belongs to the diaminopimelate epimerase family. In terms of assembly, homodimer.

It is found in the cytoplasm. The catalysed reaction is (2S,6S)-2,6-diaminopimelate = meso-2,6-diaminopimelate. It participates in amino-acid biosynthesis; L-lysine biosynthesis via DAP pathway; DL-2,6-diaminopimelate from LL-2,6-diaminopimelate: step 1/1. Catalyzes the stereoinversion of LL-2,6-diaminopimelate (L,L-DAP) to meso-diaminopimelate (meso-DAP), a precursor of L-lysine and an essential component of the bacterial peptidoglycan. The protein is Diaminopimelate epimerase of Phocaeicola vulgatus (strain ATCC 8482 / DSM 1447 / JCM 5826 / CCUG 4940 / NBRC 14291 / NCTC 11154) (Bacteroides vulgatus).